The sequence spans 607 residues: Karyogamy meiotic segregation protein 1 (607 aa).

The disordered stretch occupies residues 83–135 (DDSFANQAEKPSMEQQNSKNSIKEDANEHSVNSAHSKSSSNASPESLNPSQMM). Positions 111–132 (HSVNSAHSKSSSNASPESLNPS) are enriched in low complexity.

In terms of assembly, interacts with mcp1 and sad1.

Its subcellular location is the cytoplasm. The protein localises to the cytoskeleton. It is found in the microtubule organizing center. The protein resides in the spindle pole body. Its function is as follows. Has a role in karyogamy, recombination and segregation during meiosis. Although it has been shown to associate with the spindle pole body it is unlikely to be involved in its formation or maintenance. The polypeptide is Karyogamy meiotic segregation protein 1 (kms1) (Schizosaccharomyces pombe (strain 972 / ATCC 24843) (Fission yeast)).